Reading from the N-terminus, the 206-residue chain is N-(5'-phosphoribosyl)anthranilate isomerase (206 aa).

This sequence belongs to the TrpF family.

The catalysed reaction is N-(5-phospho-beta-D-ribosyl)anthranilate = 1-(2-carboxyphenylamino)-1-deoxy-D-ribulose 5-phosphate. It participates in amino-acid biosynthesis; L-tryptophan biosynthesis; L-tryptophan from chorismate: step 3/5. This chain is N-(5'-phosphoribosyl)anthranilate isomerase, found in Citrifermentans bemidjiense (strain ATCC BAA-1014 / DSM 16622 / JCM 12645 / Bem) (Geobacter bemidjiensis).